Consider the following 222-residue polypeptide: Adenylate kinase (222 aa).

An ATP-binding site is contributed by 16–21 (GAGKGT). Residues 36–65 (ATGDMLRSQISKGTELGLQAKKIMDQGGLV) are NMP. AMP is bound by residues T37, R42, 63-65 (GLV), 92-95 (GFPR), and Q99. Residues 133-170 (GRLIHPASGRSYHKLFNPPKEDMKDDVTGEPLVQRSDD) form an LID region. Residues R134 and 143-144 (SY) each bind ATP. Positions 167 and 178 each coordinate AMP. Residue Q206 participates in ATP binding.

It belongs to the adenylate kinase family. AK2 subfamily. As to quaternary structure, monomer.

It is found in the cytoplasm. The protein resides in the cytosol. It localises to the mitochondrion intermembrane space. It catalyses the reaction AMP + ATP = 2 ADP. In terms of biological role, catalyzes the reversible transfer of the terminal phosphate group between ATP and AMP. Plays an important role in cellular energy homeostasis and in adenine nucleotide metabolism. Adenylate kinase activity is critical for regulation of the phosphate utilization and the AMP de novo biosynthesis pathways. The sequence is that of Adenylate kinase from Candida glabrata (strain ATCC 2001 / BCRC 20586 / JCM 3761 / NBRC 0622 / NRRL Y-65 / CBS 138) (Yeast).